We begin with the raw amino-acid sequence, 607 residues long: UvrABC system protein C (607 aa).

Residues 16–94 (ARPGVYRMFD…IKQWRPPYNI (79 aa)) enclose the GIY-YIG domain. The region spanning 203 to 238 (QQLGNELNAEMEKAAMALNFEKAAELRDQIALLRRV) is the UVR domain.

It belongs to the UvrC family. Interacts with UvrB in an incision complex.

The protein resides in the cytoplasm. Its function is as follows. The UvrABC repair system catalyzes the recognition and processing of DNA lesions. UvrC both incises the 5' and 3' sides of the lesion. The N-terminal half is responsible for the 3' incision and the C-terminal half is responsible for the 5' incision. This chain is UvrABC system protein C, found in Pseudomonas putida (strain W619).